The sequence spans 459 residues: Nuclear distribution protein nudF 1 (459 aa).

One can recognise a LisH domain in the interval 9 to 41; the sequence is QAEELHKSIIAYLSANNLSNAASALRGELGLSE. The stretch at 61-88 forms a coiled coil; that stretch reads TSIVRLQKKIMDLEARCGALQTELNNAT. WD repeat units lie at residues 114 to 155, 157 to 197, 201 to 240, 243 to 282, 288 to 349, 351 to 390, 395 to 440, and 442 to 459; these read SHRN…TTLK, HTRA…KNIR, GHEH…CVKT, GHSG…NPEA, GHDH…LMTL, GHDN…KCVK, AHGR…PQVQ, and RCVV…IFAN.

The protein belongs to the WD repeat LIS1/nudF family. As to quaternary structure, self-associates. Interacts with nudE and dynein.

The protein localises to the cytoplasm. The protein resides in the cytoskeleton. Its subcellular location is the spindle pole. Positively regulates the activity of the minus-end directed microtubule motor protein dynein. May enhance dynein-mediated microtubule sliding by targeting dynein to the microtubule plus end. Required for nuclear migration during vegetative growth as well as development. Required for retrograde early endosome (EE) transport from the hyphal tip. Required for localization of dynein to the mitotic spindle poles. Recruits additional proteins to the dynein complex at SPBs. The chain is Nuclear distribution protein nudF 1 from Talaromyces marneffei (strain ATCC 18224 / CBS 334.59 / QM 7333) (Penicillium marneffei).